A 497-amino-acid chain; its full sequence is Lysophospholipid acyltransferase 5 (497 aa).

A run of 6 helical transmembrane segments spans residues 31-51, 74-94, 100-120, 173-193, 213-235, and 264-286; these read LLTI…ISVI, GLDT…VLLL, IFLA…YFYT, LELL…QFPF, AGVR…LRYL, and SLYK…GLTY. Active-site residues include Asn322 and His358. Residues 339-361 form a helical membrane-spanning segment; it reads FLNNRTISYGAALGFLAVWHGYH. N-linked (GlcNAc...) asparagine glycosylation occurs at Asn398. Transmembrane regions (helical) follow at residues 408 to 428 and 435 to 455; these read FITL…AFVF and IVVY…WAAF. The interval 469 to 497 is disordered; it reads KLAGEDQKLQDSNTDKLVEEKKPEDKKSE. Basic and acidic residues predominate over residues 470-497; that stretch reads LAGEDQKLQDSNTDKLVEEKKPEDKKSE. Ser480 bears the Phosphoserine mark.

It belongs to the membrane-bound acyltransferase family. As to expression, during gastrulation, expressed mainly along the midline in the presumptive mesoderm. During germ band elongation, expressed in mesoderm and endoderm primordia and in the cephalic furrow. Expression in mesoderm and endoderm lineages continues during germ band shortening. At the end of this process, no longer detected in somatic mesoderm or endoderm layer with expression restricted to anterior and posterior domains of the visceral mesoderm.

The protein resides in the endoplasmic reticulum. It localises to the membrane. It catalyses the reaction a 1-acyl-sn-glycero-3-phospho-L-serine + an acyl-CoA = a 1,2-diacyl-sn-glycero-3-phospho-L-serine + CoA. It carries out the reaction 1-(9Z-octadecenoyl)-sn-glycero-3-phospho-L-serine + (9Z)-hexadecenoyl-CoA = 1-(9Z-octadecenoyl)-2-(9Z-hexadecenoyl)-sn-glycero-3-phospho-L-serine + CoA. The catalysed reaction is a 1-acyl-sn-glycero-3-phosphocholine + an acyl-CoA = a 1,2-diacyl-sn-glycero-3-phosphocholine + CoA. The enzyme catalyses 1-hexadecanoyl-sn-glycero-3-phosphocholine + (9Z)-octadecenoyl-CoA = 1-hexadecanoyl-2-(9Z-octadecenoyl)-sn-glycero-3-phosphocholine + CoA. It catalyses the reaction (9Z,12Z)-octadecadienoyl-CoA + 1-hexadecanoyl-sn-glycero-3-phosphocholine = 1-hexadecanoyl-2-(9Z,12Z-octadecadienoyl)-sn-glycero-3-phosphocholine + CoA. It carries out the reaction (5Z,8Z,11Z,14Z)-eicosatetraenoyl-CoA + 1-hexadecanoyl-sn-glycero-3-phosphocholine = 1-hexadecanoyl-2-(5Z,8Z,11Z,14Z-eicosatetraenoyl)-sn-glycero-3-phosphocholine + CoA. The catalysed reaction is (9Z)-hexadecenoyl-CoA + 1-hexadecanoyl-sn-glycero-3-phosphocholine = 1-hexadecanoyl-2-(9Z-hexadecenoyl)-sn-glycero-3-phosphocholine + CoA. It participates in lipid metabolism; phospholipid metabolism. In terms of biological role, acyltransferase that mediates the acylation of lysophospholipids to produce phospholipids (glycerophospholipids). Highest activity with lysophosphatidylcholine (1-acyl-sn-glycero-3-phosphocholine or LPC) producing phosphatidylcholine (1,2-diacyl-sn-glycero-3-phosphocholine or PC) (LPCAT activity), but also converts lysophosphatidylserine (1-acyl-2-hydroxy-sn-glycero-3-phospho-L-serine or LPS) to phosphatidylserine (1,2-diacyl-sn-glycero-3-phospho-L-serine or PS) (LPSAT activity). Has a preference for unsaturated fatty acids of at least 16 carbons such as oleoyl-CoA ((9Z)-octadecenoyl-CoA) and palmitoleoyl-CoA ((9Z)-hexadecenoyl-CoA). Glycerophospholipids are important structural and functional components of cellular membrane, acyl-chain remodeling regulates the molecular species distribution of glycerophospholipids which can affect membrane fluidity and curvature. Essential for fertility and viability together with Oysgedart (Oys). Required for germ cells to migrate into the mesoderm. The polypeptide is Lysophospholipid acyltransferase 5 (Drosophila melanogaster (Fruit fly)).